A 352-amino-acid polypeptide reads, in one-letter code: Heat-inducible transcription repressor HrcA (352 aa).

It belongs to the HrcA family.

In terms of biological role, negative regulator of class I heat shock genes (grpE-dnaK-dnaJ and groELS operons). Prevents heat-shock induction of these operons. The protein is Heat-inducible transcription repressor HrcA of Lactobacillus gasseri (strain ATCC 33323 / DSM 20243 / BCRC 14619 / CIP 102991 / JCM 1131 / KCTC 3163 / NCIMB 11718 / NCTC 13722 / AM63).